Reading from the N-terminus, the 393-residue chain is Glutamyl-tRNA reductase (393 aa).

Residues 47–50, S98, 103–105, and Q109 each bind substrate; these read TCSR and ETD. C48 serves as the catalytic Nucleophile. An NADP(+)-binding site is contributed by 177 to 182; sequence GAGAVG.

Belongs to the glutamyl-tRNA reductase family. In terms of assembly, homodimer.

It carries out the reaction (S)-4-amino-5-oxopentanoate + tRNA(Glu) + NADP(+) = L-glutamyl-tRNA(Glu) + NADPH + H(+). It participates in porphyrin-containing compound metabolism; protoporphyrin-IX biosynthesis; 5-aminolevulinate from L-glutamyl-tRNA(Glu): step 1/2. Catalyzes the NADPH-dependent reduction of glutamyl-tRNA(Glu) to glutamate 1-semialdehyde (GSA). The polypeptide is Glutamyl-tRNA reductase (Pyrobaculum neutrophilum (strain DSM 2338 / JCM 9278 / NBRC 100436 / V24Sta) (Thermoproteus neutrophilus)).